Reading from the N-terminus, the 103-residue chain is Small ribosomal subunit protein uS14c (103 aa).

Belongs to the universal ribosomal protein uS14 family. Part of the 30S ribosomal subunit.

It localises to the plastid. Its subcellular location is the chloroplast. Functionally, binds 16S rRNA, required for the assembly of 30S particles. The polypeptide is Small ribosomal subunit protein uS14c (Lolium perenne (Perennial ryegrass)).